The following is a 215-amino-acid chain: Ribonuclease T (215 aa).

The region spanning 21 to 195 (VVIDVETAGF…YDSKKTAELF (175 aa)) is the Exonuclease domain. 4 residues coordinate Mg(2+): aspartate 24, glutamate 26, histidine 182, and aspartate 187. The Proton donor/acceptor role is filled by histidine 182.

This sequence belongs to the RNase T family. As to quaternary structure, homodimer. Mg(2+) is required as a cofactor.

Trims short 3' overhangs of a variety of RNA species, leaving a one or two nucleotide 3' overhang. Responsible for the end-turnover of tRNA: specifically removes the terminal AMP residue from uncharged tRNA (tRNA-C-C-A). Also appears to be involved in tRNA biosynthesis. In Wigglesworthia glossinidia brevipalpis, this protein is Ribonuclease T.